We begin with the raw amino-acid sequence, 51 residues long: Large ribosomal subunit protein eL39 (51 aa).

This sequence belongs to the eukaryotic ribosomal protein eL39 family.

The sequence is that of Large ribosomal subunit protein eL39 from Methanococcus aeolicus (strain ATCC BAA-1280 / DSM 17508 / OCM 812 / Nankai-3).